An 804-amino-acid chain; its full sequence is Phenylalanine--tRNA ligase beta subunit (804 aa).

A tRNA-binding domain is found at 39 to 155; the sequence is EEGLKKLVVG…ADVKPGQDVY (117 aa). The B5 domain occupies 408–483; that stretch reads REPVVVKTTV…RIYGYDNLKS (76 aa). Residues Asp461, Asp467, Glu470, and Glu471 each contribute to the Mg(2+) site. In terms of domain architecture, FDX-ACB spans 711-804; it reads PKFPAIERDL…LENDLDIKVR (94 aa).

Belongs to the phenylalanyl-tRNA synthetase beta subunit family. Type 1 subfamily. As to quaternary structure, tetramer of two alpha and two beta subunits. Requires Mg(2+) as cofactor.

It is found in the cytoplasm. It carries out the reaction tRNA(Phe) + L-phenylalanine + ATP = L-phenylalanyl-tRNA(Phe) + AMP + diphosphate + H(+). This is Phenylalanine--tRNA ligase beta subunit from Lactobacillus acidophilus (strain ATCC 700396 / NCK56 / N2 / NCFM).